We begin with the raw amino-acid sequence, 397 residues long: RNA binding protein fox-1 homolog 1 (397 aa).

Positions 1–121 (MNCEREQLRG…NKSQPKRLHV (121 aa)) are disordered. Residues 70 to 87 (QTHSEQSPADTSAQTVSG) are compositionally biased toward polar residues. The span at 88 to 99 (TATQTDDAAPTD) shows a compositional bias: low complexity. Over residues 100–113 (GQPQTQPSENTENK) the composition is skewed to polar residues. One can recognise an RRM domain in the interval 117-193 (KRLHVSNIPF…RKIEVNNATA (77 aa)). Position 317 is an asymmetric dimethylarginine (Arg-317). Arg-388 is subject to Omega-N-methylarginine.

As to quaternary structure, binds to the C-terminus of ATXN2. As to expression, predominantly expressed in muscle and brain.

It is found in the nucleus. Its subcellular location is the cytoplasm. RNA-binding protein that regulates alternative splicing events by binding to 5'-UGCAUGU-3' elements. Regulates alternative splicing of tissue-specific exons and of differentially spliced exons during erythropoiesis. The protein is RNA binding protein fox-1 homolog 1 (RBFOX1) of Homo sapiens (Human).